Consider the following 60-residue polypeptide: Potassium channel toxin alpha-KTx 3.16 (60 aa).

A signal peptide spans methionine 1–glycine 23. Disulfide bonds link cysteine 30–cysteine 50, cysteine 36–cysteine 55, and cysteine 40–cysteine 57.

It belongs to the short scorpion toxin superfamily. Potassium channel inhibitor family. Alpha-KTx 03 subfamily. Expressed by the venom gland.

Its subcellular location is the secreted. Its function is as follows. Potassium channel inhibitor. In Mesobuthus gibbosus (Mediterranean checkered scorpion), this protein is Potassium channel toxin alpha-KTx 3.16.